The chain runs to 332 residues: Glycerol-3-phosphate dehydrogenase [NAD(P)+] (332 aa).

NADPH-binding residues include serine 11, phenylalanine 12, lysine 32, and lysine 106. Residues lysine 106, glycine 137, and serine 139 each coordinate sn-glycerol 3-phosphate. Alanine 141 provides a ligand contact to NADPH. The sn-glycerol 3-phosphate site is built by lysine 192, aspartate 245, serine 255, arginine 256, and asparagine 257. Lysine 192 acts as the Proton acceptor in catalysis. Arginine 256 lines the NADPH pocket. NADPH contacts are provided by valine 280 and glutamate 282.

This sequence belongs to the NAD-dependent glycerol-3-phosphate dehydrogenase family.

The protein resides in the cytoplasm. It carries out the reaction sn-glycerol 3-phosphate + NAD(+) = dihydroxyacetone phosphate + NADH + H(+). The enzyme catalyses sn-glycerol 3-phosphate + NADP(+) = dihydroxyacetone phosphate + NADPH + H(+). It participates in membrane lipid metabolism; glycerophospholipid metabolism. In terms of biological role, catalyzes the reduction of the glycolytic intermediate dihydroxyacetone phosphate (DHAP) to sn-glycerol 3-phosphate (G3P), the key precursor for phospholipid synthesis. The sequence is that of Glycerol-3-phosphate dehydrogenase [NAD(P)+] from Staphylococcus aureus (strain bovine RF122 / ET3-1).